The chain runs to 216 residues: Pyridoxine/pyridoxamine 5'-phosphate oxidase (216 aa).

Substrate-binding positions include 9 to 12 (RLSY) and arginine 67. FMN-binding positions include 62 to 67 (RIVLLR), 77 to 78 (YT), lysine 84, and glutamine 106. Substrate is bound by residues tyrosine 124, arginine 128, and serine 132. FMN is bound by residues 142–143 (QS) and tryptophan 188. 194-196 (RMH) is a binding site for substrate. Arginine 198 contacts FMN.

Belongs to the pyridoxamine 5'-phosphate oxidase family. As to quaternary structure, homodimer. It depends on FMN as a cofactor.

The catalysed reaction is pyridoxamine 5'-phosphate + O2 + H2O = pyridoxal 5'-phosphate + H2O2 + NH4(+). The enzyme catalyses pyridoxine 5'-phosphate + O2 = pyridoxal 5'-phosphate + H2O2. The protein operates within cofactor metabolism; pyridoxal 5'-phosphate salvage; pyridoxal 5'-phosphate from pyridoxamine 5'-phosphate: step 1/1. Its pathway is cofactor metabolism; pyridoxal 5'-phosphate salvage; pyridoxal 5'-phosphate from pyridoxine 5'-phosphate: step 1/1. In terms of biological role, catalyzes the oxidation of either pyridoxine 5'-phosphate (PNP) or pyridoxamine 5'-phosphate (PMP) into pyridoxal 5'-phosphate (PLP). The protein is Pyridoxine/pyridoxamine 5'-phosphate oxidase of Psychrobacter arcticus (strain DSM 17307 / VKM B-2377 / 273-4).